Reading from the N-terminus, the 240-residue chain is Dihydromonapterin reductase (240 aa).

The Proton acceptor role is filled by Tyr-152.

It belongs to the short-chain dehydrogenases/reductases (SDR) family. FolM subfamily.

It carries out the reaction (6S)-5,6,7,8-tetrahydrofolate + NADP(+) = 7,8-dihydrofolate + NADPH + H(+). The enzyme catalyses 7,8-dihydromonapterin + NADPH + H(+) = 5,6,7,8-tetrahydromonapterin + NADP(+). Functionally, catalyzes the reduction of dihydromonapterin to tetrahydromonapterin. Also has lower activity with dihydrofolate. In Escherichia coli O6:K15:H31 (strain 536 / UPEC), this protein is Dihydromonapterin reductase (folM).